The primary structure comprises 89 residues: Protein S100-A8 (89 aa).

2 consecutive EF-hand domains span residues Leu-12–Lys-47 and Met-46–Glu-81. His-17 and His-27 together coordinate Zn(2+). Ca(2+) is bound at residue Asp-33. An S-nitrosocysteine modification is found at Cys-42. 4 residues coordinate Ca(2+): Asp-59, Asn-61, Asp-63, and Glu-70. His-83 is a Zn(2+) binding site.

The protein belongs to the S-100 family. In terms of assembly, homodimer. Preferentially exists as a heterodimer or heterotetramer with S100A9 known as calprotectin (S100A8/A9). S100A8 interacts with AGER, ATP2A2 and with the heterodimeric complex formed by TLR4 and LY96. Calprotectin (S100A8/9) interacts with CEACAM3 and tubulin filaments in a calcium-dependent manner. Heterotetrameric calprotectin (S100A8/A9) interacts with ANXA6 and associates with tubulin filaments in activated monocytes. S100A8 and calprotectin (S100A8/9) interact with NCF2/P67PHOX, RAC1 and RAC2. Calprotectin (S100A8/9) interacts with CYBA and CYBB. Calprotectin (S100A8/9) interacts with NOS2 to form the iNOS-S100A8/A9 transnitrosylase complex. Calprotectin (S100A8/9) interacts with CD69. Found essentially in phagocytic cells.

The protein localises to the secreted. It localises to the cytoplasm. It is found in the cytoskeleton. The protein resides in the cell membrane. S100A8 is a calcium- and zinc-binding protein which plays a prominent role in the regulation of inflammatory processes and immune response. It can induce neutrophil chemotaxis and adhesion. Predominantly found as calprotectin (S100A8/A9) which has a wide plethora of intra- and extracellular functions. The intracellular functions include: facilitating leukocyte arachidonic acid trafficking and metabolism, modulation of the tubulin-dependent cytoskeleton during migration of phagocytes and activation of the neutrophilic NADPH-oxidase. Also participates in regulatory T-cell differentiation together with CD69. Activates NADPH-oxidase by facilitating the enzyme complex assembly at the cell membrane, transferring arachidonic acid, an essential cofactor, to the enzyme complex and S100A8 contributes to the enzyme assembly by directly binding to NCF2/P67PHOX. The extracellular functions involve pro-inflammatory, antimicrobial, oxidant-scavenging and apoptosis-inducing activities. Its pro-inflammatory activity includes recruitment of leukocytes, promotion of cytokine and chemokine production, and regulation of leukocyte adhesion and migration. Acts as an alarmin or a danger associated molecular pattern (DAMP) molecule and stimulates innate immune cells via binding to pattern recognition receptors such as Toll-like receptor 4 (TLR4) and receptor for advanced glycation endproducts (AGER). Binding to TLR4 and AGER activates the MAP-kinase and NF-kappa-B signaling pathways resulting in the amplification of the pro-inflammatory cascade. Has antimicrobial activity towards bacteria and fungi and exerts its antimicrobial activity probably via chelation of Zn(2+) which is essential for microbial growth. Can induce cell death via autophagy and apoptosis and this occurs through the cross-talk of mitochondria and lysosomes via reactive oxygen species (ROS) and the process involves BNIP3. Can regulate neutrophil number and apoptosis by an anti-apoptotic effect; regulates cell survival via ITGAM/ITGB and TLR4 and a signaling mechanism involving MEK-ERK. Its role as an oxidant scavenger has a protective role in preventing exaggerated tissue damage by scavenging oxidants. The iNOS-S100A8/A9 transnitrosylase complex is proposed to direct selective inflammatory stimulus-dependent S-nitrosylation of multiple targets such as GAPDH, ANXA5, EZR, MSN and VIM by recognizing a [IL]-x-C-x-x-[DE] motif; S100A8 seems to contribute to S-nitrosylation site selectivity. The polypeptide is Protein S100-A8 (S100A8) (Bos taurus (Bovine)).